A 211-amino-acid chain; its full sequence is Protein-L-isoaspartate O-methyltransferase 2 (211 aa).

S61 is an active-site residue.

This sequence belongs to the methyltransferase superfamily. L-isoaspartyl/D-aspartyl protein methyltransferase family.

The protein resides in the cytoplasm. It catalyses the reaction [protein]-L-isoaspartate + S-adenosyl-L-methionine = [protein]-L-isoaspartate alpha-methyl ester + S-adenosyl-L-homocysteine. In terms of biological role, catalyzes the methyl esterification of L-isoaspartyl residues in peptides and proteins that result from spontaneous decomposition of normal L-aspartyl and L-asparaginyl residues. It plays a role in the repair and/or degradation of damaged proteins. This Polaromonas sp. (strain JS666 / ATCC BAA-500) protein is Protein-L-isoaspartate O-methyltransferase 2.